Consider the following 402-residue polypeptide: Phosphoglycerate kinase (402 aa).

Substrate contacts are provided by residues 24 to 26 (DFN), R40, 63 to 66 (HFGR), R122, and R155. ATP contacts are provided by residues K206, G297, E328, and 358–361 (GGDS).

The protein belongs to the phosphoglycerate kinase family. In terms of assembly, monomer.

It is found in the cytoplasm. The catalysed reaction is (2R)-3-phosphoglycerate + ATP = (2R)-3-phospho-glyceroyl phosphate + ADP. It functions in the pathway carbohydrate degradation; glycolysis; pyruvate from D-glyceraldehyde 3-phosphate: step 2/5. This is Phosphoglycerate kinase from Prochlorococcus marinus (strain MIT 9301).